A 34-amino-acid chain; its full sequence is Photosystem I reaction center subunit XII (34 aa).

Residues 9-29 (LIALSLIVVVHAGVLALRLGI) form a helical membrane-spanning segment.

The protein belongs to the PsaM family.

Its subcellular location is the cellular thylakoid membrane. The polypeptide is Photosystem I reaction center subunit XII (Prochlorococcus marinus (strain MIT 9312)).